A 360-amino-acid chain; its full sequence is MNACLVGIWLWLPLLFTWLSPEVSSSWWYMRATSGSSRVMCDNVPGLVSHQRQLCHRHPDVMRAIGLGVTEWTMECQHQFRQHRWNCNTLDRDHSLFGRVLLRSSRESAFVYAISSAGVVFAITRACSQGELKSCSCDPKKKGTAKDNKGTFDWGGCSDNIDYGIKFARAFVDAKERKGKDARALMNLHNNRAGRKAVKRFLKQECKCHGVSGSCTLRTCWLAMADFRKTGNYLWRKYNGAIQVVMNQDGTGFTVANKRFKKPTKNDLVYFENSPDYCIRDRDAGSLGTAGRVCNLTSRGMDSCEVMCCGRGYDTSHITRKTKCECKFHWCCAVRCQDCVEALDVHTCKAPKSPDWAAPT.

The first 25 residues, 1 to 25 (MNACLVGIWLWLPLLFTWLSPEVSS), serve as a signal peptide directing secretion. 11 cysteine pairs are disulfide-bonded: cysteine 76–cysteine 87, cysteine 127–cysteine 135, cysteine 137–cysteine 157, cysteine 206–cysteine 220, cysteine 208–cysteine 215, cysteine 278–cysteine 309, cysteine 294–cysteine 304, cysteine 308–cysteine 348, cysteine 324–cysteine 339, cysteine 326–cysteine 336, and cysteine 331–cysteine 332. Serine 212 carries O-palmitoleoyl serine; by PORCN lipidation. The N-linked (GlcNAc...) asparagine glycan is linked to asparagine 295.

The protein belongs to the Wnt family. In terms of processing, palmitoleoylation is required for efficient binding to frizzled receptors. Depalmitoleoylation leads to Wnt signaling pathway inhibition.

Its subcellular location is the secreted. It localises to the extracellular space. The protein localises to the extracellular matrix. Ligand for members of the frizzled family of seven transmembrane receptors. Probable developmental protein. May be a signaling molecule which affects the development of discrete regions of tissues. Is likely to signal over only few cell diameters. This Muntiacus muntjak (Barking deer) protein is Protein Wnt-2 (WNT2).